Reading from the N-terminus, the 454-residue chain is Sensor histidine kinase RppB (454 aa).

Topologically, residues Met-1–Gln-13 are periplasmic. A helical transmembrane segment spans residues Leu-14 to Tyr-34. At Arg-35–Arg-186 the chain is on the cytoplasmic side. Residues Ile-187–Trp-207 traverse the membrane as a helical segment. The Periplasmic segment spans residues Gly-208–Ser-454. The Histidine kinase domain occupies Asn-230–Ser-448. His-233 bears the Phosphohistidine; by autocatalysis mark.

It is found in the cell inner membrane. The catalysed reaction is ATP + protein L-histidine = ADP + protein N-phospho-L-histidine.. Its function is as follows. Member of two-component regulatory system RppA/RppB, involved in the establishment of the appropriate stoichiometry between the 2 photosystems. It senses changes in the plastoquinone (PQ) redox poise. Another group shows this two-component pair, renamed NrsR/NrsS, controls the nickel-dependent expression of the nrsBACD operon; they suggest the photosystem-related activities seen earlier are due to the expression of NrsS (RppB) in the absence of its natural substrate NrsR (RppA). This chain is Sensor histidine kinase RppB, found in Synechocystis sp. (strain ATCC 27184 / PCC 6803 / Kazusa).